The chain runs to 101 residues: Unclassified hydrophobin dewD (101 aa).

Residues 1-21 (MHLSTSAAAILALSLAGPTMA) form the signal peptide. 4 cysteine pairs are disulfide-bonded: C27/C81, C41/C73, C42/C60, and C82/C91.

In terms of assembly, self-assembles to form functional amyloid fibrils called rodlets. Self-assembly into fibrillar rodlets occurs spontaneously at hydrophobic:hydrophilic interfaces and the rodlets further associate laterally to form amphipathic monolayers.

The protein resides in the secreted. The protein localises to the spore wall. Aerial growth, conidiation, and dispersal of filamentous fungi in the environment rely upon a capability of their secreting small amphipathic proteins called hydrophobins (HPBs) with low sequence identity. Class I can self-assemble into an outermost layer of rodlet bundles on aerial cell surfaces, conferring cellular hydrophobicity that supports fungal growth, development and dispersal; whereas Class II form highly ordered films at water-air interfaces through intermolecular interactions but contribute nothing to the rodlet structure. DewD is an unclassified hydrophobin that contributes to the hydrophobicity of the spore surface. This Emericella nidulans (strain FGSC A4 / ATCC 38163 / CBS 112.46 / NRRL 194 / M139) (Aspergillus nidulans) protein is Unclassified hydrophobin dewD.